The chain runs to 1361 residues: DNA-directed RNA polymerase subunit beta (1361 aa).

Belongs to the RNA polymerase beta chain family. In terms of assembly, the RNAP catalytic core consists of 2 alpha, 1 beta, 1 beta' and 1 omega subunit. When a sigma factor is associated with the core the holoenzyme is formed, which can initiate transcription.

It carries out the reaction RNA(n) + a ribonucleoside 5'-triphosphate = RNA(n+1) + diphosphate. Functionally, DNA-dependent RNA polymerase catalyzes the transcription of DNA into RNA using the four ribonucleoside triphosphates as substrates. This is DNA-directed RNA polymerase subunit beta from Saccharophagus degradans (strain 2-40 / ATCC 43961 / DSM 17024).